The chain runs to 113 residues: Large ribosomal subunit protein uL22 (113 aa).

Belongs to the universal ribosomal protein uL22 family. As to quaternary structure, part of the 50S ribosomal subunit.

In terms of biological role, this protein binds specifically to 23S rRNA; its binding is stimulated by other ribosomal proteins, e.g. L4, L17, and L20. It is important during the early stages of 50S assembly. It makes multiple contacts with different domains of the 23S rRNA in the assembled 50S subunit and ribosome. Its function is as follows. The globular domain of the protein is located near the polypeptide exit tunnel on the outside of the subunit, while an extended beta-hairpin is found that lines the wall of the exit tunnel in the center of the 70S ribosome. The polypeptide is Large ribosomal subunit protein uL22 (Oceanobacillus iheyensis (strain DSM 14371 / CIP 107618 / JCM 11309 / KCTC 3954 / HTE831)).